The primary structure comprises 270 residues: MFGMLSSSFEDDPFFSDSFIAHRESMRQMMRSFSEPFGRDMLSISDRRGRARNRMGHEDEENSLTHTDVSPFQAMDRMMLNMRNSMQELQRNFGHLSMDPNGHSFSSSSVMTYSKVGDEPPKVFQASTQTRRAPGGIKETRKALRDSDSGLEKMAVGHHLHDRAHVIKKSKNNKTGDEEVNQEFINMNECDAHAFDDEWQNEILKYQPRGQWRNLDNSRMRSVAHENSGSRELKRREKHHQSPAIEHGRRSNVFVDKLNIKGSPVKINKK.

S6, S8, S32, and S34 each carry phosphoserine. An interaction with COPS3 region spans residues 50 to 125 (RARNRMGHED…VGDEPPKVFQ (76 aa)). Disordered stretches follow at residues 127-148 (STQT…RDSD) and 221-247 (RSVA…AIEH). Basic and acidic residues predominate over residues 138–148 (KETRKALRDSD).

This sequence belongs to the MLF family. As to quaternary structure, interacts with CENPU. Also interacts with NRBP1/MADM, YWHAZ/14-3-3-zeta and HNRPUL2/MANP. NRBP1 recruits a serine kinase which phosphorylates both itself and MLF1. Phosphorylated MLF1 then binds to YWHAZ and is retained in the cytoplasm. Retained in the nucleus by binding to HNRPUL2. Binds to COPS3/CSN3 which is required for suppression of COP1 and activation of p53. Post-translationally, phosphorylation is required for binding to YWHAZ.

The protein localises to the cytoplasm. Its subcellular location is the nucleus. It is found in the cell projection. It localises to the cilium. The protein resides in the cytoskeleton. The protein localises to the cilium basal body. Involved in lineage commitment of primary hemopoietic progenitors by restricting erythroid formation and enhancing myeloid formation. Interferes with erythropoietin-induced erythroid terminal differentiation by preventing cells from exiting the cell cycle through suppression of CDKN1B/p27Kip1 levels. Suppresses COP1 activity via CSN3 which activates p53 and induces cell cycle arrest. Binds DNA and affects the expression of a number of genes so may function as a transcription factor in the nucleus. The protein is Myeloid leukemia factor 1 (MLF1) of Bos taurus (Bovine).